The sequence spans 399 residues: Elongation factor Tu (399 aa).

The 200-residue stretch at 10-209 folds into the tr-type G domain; the sequence is KPHVNIGTIG…EVDAYIPTPE (200 aa). Residues 19-26 form a G1 region; it reads GHVDHGKT. 19-26 provides a ligand contact to GTP; sequence GHVDHGKT. Mg(2+) is bound at residue Thr26. The tract at residues 60 to 64 is G2; the sequence is GITIA. The G3 stretch occupies residues 81–84; sequence DCPG. GTP is bound by residues 81–85 and 136–139; these read DCPGH and NKQD. The tract at residues 136–139 is G4; that stretch reads NKQD. The tract at residues 174 to 176 is G5; that stretch reads SAL.

This sequence belongs to the TRAFAC class translation factor GTPase superfamily. Classic translation factor GTPase family. EF-Tu/EF-1A subfamily. Monomer.

It is found in the cytoplasm. It carries out the reaction GTP + H2O = GDP + phosphate + H(+). In terms of biological role, GTP hydrolase that promotes the GTP-dependent binding of aminoacyl-tRNA to the A-site of ribosomes during protein biosynthesis. This Helicobacter pylori (strain G27) protein is Elongation factor Tu.